The primary structure comprises 203 residues: uncharacterized protein (203 aa).

This is an uncharacterized protein from Aquifex aeolicus (strain VF5).